The sequence spans 592 residues: A-type ATP synthase subunit A (592 aa).

234 to 241 (GAFGTGKT) is an ATP binding site.

The protein belongs to the ATPase alpha/beta chains family. As to quaternary structure, has multiple subunits with at least A(3), B(3), C, D, E, F, H, I and proteolipid K(x).

The protein resides in the cell membrane. It catalyses the reaction ATP + H2O + 4 H(+)(in) = ADP + phosphate + 5 H(+)(out). In terms of biological role, component of the A-type ATP synthase that produces ATP from ADP in the presence of a proton gradient across the membrane. The A chain is the catalytic subunit. This is A-type ATP synthase subunit A from Nitrosopumilus maritimus (strain SCM1).